A 250-amino-acid chain; its full sequence is Aquaporin TIP1-1 (250 aa).

2 helical membrane passes run 24-44 (FAEF…GMAF) and 56-76 (AGLI…VSVG). Residues 85 to 87 (NPA) carry the NPA 1 motif. 3 helical membrane passes run 104–126 (LLYW…FSTG), 143–163 (ALVL…ATAV), and 172–192 (TIAP…GGAF). Residues 198 to 200 (NPA) carry the NPA 2 motif. Residues 218–238 (YWVGPLIGGGLAGVIYELLFI) form a helical membrane-spanning segment.

It belongs to the MIP/aquaporin (TC 1.A.8) family. TIP (TC 1.A.8.10) subfamily. In terms of tissue distribution, expressed in roots, shoots, leaves, tassels, ears and embryos. Expressed in meristems and zones of cell enlargement: tips of primary and lateral roots, leaf primordia, and male and female inflorescence meristems. Highly expressed in the root epidermis and endodermis, parenchyma cells surrounding mature xylem vessels in the root and the stem, phloem companion cells and a ring of cells around the phloem strand in the stem and the leaf sheath, and the basal endosperm transfer cells in developing kernels.

The protein resides in the vacuole membrane. Water channel required to facilitate the transport of water across cell membrane. May support the rapid influx of water into vacuoles during cell expansion, permit osmotic equilibration between the cytosol and the vacuolar content and rapid transcellular water flow through living cells. Its function is impaired by Hg(2+). The chain is Aquaporin TIP1-1 (TIP1-1) from Zea mays (Maize).